Consider the following 365-residue polypeptide: uncharacterized protein (365 aa).

Position 31–38 (31–38) interacts with ATP; that stretch reads GPINSGKT.

Belongs to the archaeal ATPase family.

This is an uncharacterized protein from Methanocaldococcus jannaschii (strain ATCC 43067 / DSM 2661 / JAL-1 / JCM 10045 / NBRC 100440) (Methanococcus jannaschii).